The chain runs to 550 residues: Hydroxylamine reductase (550 aa).

[2Fe-2S] cluster contacts are provided by Cys3, Cys6, Cys18, and Cys25. Hybrid [4Fe-2O-2S] cluster is bound by residues His249, Glu273, Cys317, Cys405, Cys433, Cys458, Glu492, and Lys494. Residue Cys405 is modified to Cysteine persulfide.

This sequence belongs to the HCP family. Requires [2Fe-2S] cluster as cofactor. Hybrid [4Fe-2O-2S] cluster serves as cofactor.

The protein localises to the cytoplasm. It catalyses the reaction A + NH4(+) + H2O = hydroxylamine + AH2 + H(+). Catalyzes the reduction of hydroxylamine to form NH(3) and H(2)O. This is Hydroxylamine reductase from Escherichia coli O7:K1 (strain IAI39 / ExPEC).